Here is a 1241-residue protein sequence, read N- to C-terminus: RNA polymerase II C-terminal domain phosphatase-like 3 (1241 aa).

Disordered regions lie at residues 361 to 402, 428 to 470, 505 to 525, 578 to 598, 677 to 702, 720 to 800, and 852 to 885; these read DHDA…TTEG, VFKT…HLIY, ISAP…RDPR, KRQK…WLED, AIQK…VSTP, VLQD…QNGT, and TERD…GPTR. Positions 368-378 are enriched in polar residues; the sequence is PSPTRETTPSL. Over residues 441 to 466 the composition is skewed to low complexity; it reads GEPNDGNGDVGGEVSSSVVKSSNPGS. Basic and acidic residues predominate over residues 677–686; it reads AIQKPMDPRR. Polar residues-rich tracts occupy residues 691-702 and 791-800; these read PGSSVQPGVSTP and PRQNISQNGT. The segment covering 871–881 has biased composition (low complexity); that stretch reads SVSAASVTAAA. Residues 923–1103 form the FCP1 homology domain; the sequence is FASQKLSLVL…GLLGPSLLEL (181 aa). The BRCT domain maps to 1146–1239; it reads EQRKILAGCR…QRANENLYAI (94 aa).

In terms of assembly, interacts with RAP74. It depends on Mg(2+) as a cofactor. Co(2+) is required as a cofactor. Requires Mn(2+) as cofactor.

It is found in the nucleus. It carries out the reaction O-phospho-L-seryl-[protein] + H2O = L-seryl-[protein] + phosphate. It catalyses the reaction O-phospho-L-threonyl-[protein] + H2O = L-threonyl-[protein] + phosphate. Functionally, completely dephosphorylates 'Ser-2', and partially 'Ser-5' and 'Ser-7' of the heptad repeats YSPTSPS in the C-terminal domain (CTD) of the largest RNA polymerase II subunit (RPB1). Involved in defense response. Acts as a negative regulator of immune gene expression and immunity to pathogen infections. Preferentially dephosphorylates 'Ser-2' of RNA polymerase II CTD. This counterregulates the MAP kinase (MAPK) or cyclin-dependent kinase C (CDKC)-mediated phosphorylation of CTD in response to pathogens and upon perception of microbe-associated molecular patterns (MAMPs). MAPKs phosphorylate and activate CDKCs, which are CTD kinases that positively regulate plant innate immunity. Acts as a negative regulator of stress gene transcription involved in abscisic acid (ABA) mediated signaling pathway and cold resistance. Acts as a post-transcriptional gene silencing (PTGS) suppressor. This is RNA polymerase II C-terminal domain phosphatase-like 3 from Arabidopsis thaliana (Mouse-ear cress).